The following is a 1146-amino-acid chain: Myosin heavy chain kinase A (1146 aa).

The tract at residues Met-1–Val-25 is disordered. Positions Glu-100–Leu-120 form a coiled coil. The disordered stretch occupies residues Ile-158–Ser-191. Residues Gly-172 to Gly-181 are compositionally biased toward gly residues. Coiled coils occupy residues Gly-187 to Glu-241 and Ser-297 to Ser-502. The tract at residues Ser-500–Asn-551 is pseudosubstrate/autoinhibitory domain. Positions Leu-521–Lys-534 are enriched in polar residues. A disordered region spans residues Leu-521–Ser-540. Positions Ile-552–Ala-852 are catalytic. The region spanning Glu-564–Lys-808 is the Alpha-type protein kinase domain. Gly-778 to Gly-783 is an ATP binding site. WD repeat units lie at residues Ser-867–Asp-897, Gly-910–Ile-938, Gly-952–Asp-980, Val-993–Asp-1021, Gly-1033–Asp-1061, Gly-1073–Asp-1101, and Ser-1114–Glu-1142.

It belongs to the protein kinase superfamily. Alpha-type protein kinase family. ALPK subfamily. In terms of assembly, oligomer. It depends on Mg(2+) as a cofactor. Mn(2+) serves as cofactor. Post-translationally, the N-terminus is blocked.

It carries out the reaction L-threonyl-[myosin heavy-chain] + ATP = O-phospho-L-threonyl-[myosin heavy-chain] + ADP + H(+). Its function is as follows. Catalyzes its autophosphorylation, which is needed for enzymatic activity and phosphorylates myosin II heavy chain at a threonine in the C-terminal tail region. This phosphorylation is critical for regulating the assembly and disassembly of myosin II filament, affecting myosin localization during an array of cellular contractile events, including cytokinesis and capping of cell surface receptors as well as chemotactic cell locomotion. In Dictyostelium discoideum (Social amoeba), this protein is Myosin heavy chain kinase A (mhkA).